Reading from the N-terminus, the 131-residue chain is Protein E11 homolog (131 aa).

This sequence belongs to the chordopoxvirinae E11 family.

The protein localises to the virion. The sequence is that of Protein E11 homolog from Fowlpox virus (strain NVSL) (FPV).